Here is a 1347-residue protein sequence, read N- to C-terminus: Protocadherin-11 X-linked (1347 aa).

A signal peptide spans 1 to 23 (MDLLSGTYIFAVLLACVVFHSGA). Topologically, residues 24 to 812 (QEKNYTIREE…VSSPTSDYVK (789 aa)) are extracellular. Cadherin domains are found at residues 26 to 139 (KNYT…APLF), 140 to 249 (PATV…HPVF), 250 to 355 (KETE…VPSI), 362 to 466 (NPVN…APVF), 467 to 570 (TQSF…SPVF), 571 to 673 (THNE…KPVF), and 677 to 795 (PSNC…APVT). N-linked (GlcNAc...) asparagine glycans are attached at residues Asn27, Asn48, and Asn54. Asn344 carries an N-linked (GlcNAc...) asparagine glycan. N-linked (GlcNAc...) asparagine glycosylation is present at Asn553. An N-linked (GlcNAc...) asparagine glycan is attached at Asn773. The chain crosses the membrane as a helical span at residues 813–833 (ILVAAVAGTITVVVVIFITAV). Over 834-1347 (VRCRQAPHLK…DSPIMEEHPL (514 aa)) the chain is Cytoplasmic. Disordered stretches follow at residues 1057–1091 (LPEG…GYPQ), 1097–1116 (RATP…ESTF), and 1326–1347 (FTPR…EHPL).

Expressed strongly in fetal brain and brain (cortex, amygdala, thalamus, substantia nigra, hippocampus, caudate nucleus and corpus callosum). Expressed at low level in testis.

The protein localises to the cell membrane. Functionally, potential calcium-dependent cell-adhesion protein. This Homo sapiens (Human) protein is Protocadherin-11 X-linked (PCDH11X).